Consider the following 381-residue polypeptide: Chymosin (381 aa).

Residues 1-16 form the signal peptide; sequence MRGFVVLLAVFALSQA. A propeptide spans 17–58 (activation peptide); that stretch reads SGIVRIPLHKGKSLRRALKERGLLEDFLKNHQHAVSRKHSNS. Residues 74–378 form the Peptidase A1 domain; the sequence is YFGKIYIGTP…DRASNLVGLA (305 aa). Aspartate 92 is an active-site residue. Copy 1 of the repeat occupies 92-102; sequence DTGSSDLWVPS. Intrachain disulfides connect cysteine 105-cysteine 110 and cysteine 265-cysteine 269. Residue aspartate 274 is part of the active site. Repeat unit 2 spans residues 274–284; the sequence is DTGTSMLVGPG. The cysteines at positions 308 and 341 are disulfide-linked.

Belongs to the peptidase A1 family. As to quaternary structure, monomer.

It catalyses the reaction Broad specificity similar to that of pepsin A. Clots milk by cleavage of a single 104-Ser-Phe-|-Met-Ala-107 bond in kappa-chain of casein.. Inhibited by pepstatin. In terms of biological role, hydrolyzes a variety of proteins. The chain is Chymosin (CYM) from Callithrix jacchus (White-tufted-ear marmoset).